Consider the following 160-residue polypeptide: uncharacterized protein (160 aa).

Positions 1 to 29 (MTGKTHIMGGIASCTAAAYYYGFDPVLMA) are cleaved as a signal peptide. 2 helical membrane passes run 67-87 (TFTH…TYIP) and 137-157 (QLVL…LFHG).

This sequence to E.coli YdjM.

It localises to the cell membrane. This is an uncharacterized protein from Bacillus subtilis (strain 168).